We begin with the raw amino-acid sequence, 722 residues long: MRPNLLAAAIAVPLSLLAAQIAQAGEGMWVPQQLPEIAGPLKKAGLKLSPQQISDLTGDPMGAVVALGGCTASFVSPNGLVVTNHHCAYGAIQLNSTAENNLIKNGFNAPTTADEVSAGPNARVFVLDEITDVTKDAKAAIAAAGDDALARTKALEAFEKKLIADCEAEAGFRCRLYSFSGGNTYRLFKNLEIKDVRLAYAPPGSVGKFGGDIDNWMWPRHTGDFAFYRAYVGKDGKPAAFSKDNVPYQPKHWLKFADQPLGAGDFVMVAGYPGSTNRYALAAEFDNTAQWTYPTIARHYKNQIAMVEAAGKQNADIQVKYAATMAGWNNTSKNYDGQLEGFKRIDAAGQKLREEAAVLGWLKGQGAKGQPALDAHAKLLDLLEQSKATRDRDLTLALFNNTAMLGSATQLYRLSIEREKPNAERESGYQERDLPAIEGGLKQLERRYVAAMDRQLQEYWLNEYIKLPADQRVAAVDAWLGGNDAAAVKRALDRLAGTKLGSTEERLKWFAADRKAFEASNDPAIQYAVAVMPTLLKLEQERKTRAGENLAARPVYLQALADYKKSQGEFVYPDANLSLRITFGNVMGYAPKDGMEYTPFTTLEGVVAKETGQDPFDSPKALLDAVAAKRYGGLEDKRIGSVPVNYLSDLDITGGNSGSPVLDAHGKLVGLAFDGNWESVSSNWVFDPKMTRMIAVDGRYLRWIMQEVYPAPQLLKEMNVGK.

The first 24 residues, 1-24, serve as a signal peptide directing secretion; sequence MRPNLLAAAIAVPLSLLAAQIAQA. Intrachain disulfides connect C70–C87 and C166–C174. H86 serves as the catalytic Charge relay system. Residue 215–216 coordinates substrate; sequence NW. D224 functions as the Charge relay system in the catalytic mechanism. Residues N330, 655-657, and 673-674 each bind substrate; these read GNS and FD. S657 serves as the catalytic Charge relay system.

This sequence belongs to the peptidase S46 family. As to quaternary structure, homodimer.

With respect to regulation, completely inhibited by the serine protease inhibitor diisopropyl fluorophosphate (DFP) and potently inhibited by 0.5 mM ZnCl(2), 10 mM o-phenanthlorine, phenylmethanesulfonyl fluoride (PMSF) and N-tosyl-L-phenyl-alanyl chloromethyl ketone (TPCK), but not by N-tosyl-L-lysyl chloromethyl ketone (TLCK). Activity is not affected significantly by protease inhibitors, such as chymostatin, leupeptin, N-ethylmaleimide (NEM), iodoacetate (IAA), L-trans-epoxysuccinyl-leucylamido(4-guanido)butane (E64) and pepstatin A or by CoCl(2), CaCl(2) and EDTA. Its function is as follows. Exopeptidase that catalyzes the removal of dipeptide units (NH2-P2-P1-) from the free amino termini of oligopeptides and small proteins. Peptide digestion is sequential and substrate recognition is non-specific, with the exception that Pro is not suitable as a P1 residue. Removes many residues of bioactive oligopeptides such as angiotensin I and neuromedin N and also cleaves oxidized insulin B chain. Able to hydrolyze an X-Pro bond, an imido bond. No endopeptidase activity. May play a physiological role in feeding. The polypeptide is Dipeptidyl aminopeptidase BII (Pseudoxanthomonas mexicana).